Consider the following 349-residue polypeptide: tRNA pseudouridine synthase D (349 aa).

Residue F27 coordinates substrate. The active-site Nucleophile is D80. N129 lines the substrate pocket. Residues 155 to 303 (GVPNYFGAQR…VEAARRAMLL (149 aa)) enclose the TRUD domain. F329 lines the substrate pocket.

It belongs to the pseudouridine synthase TruD family.

The enzyme catalyses uridine(13) in tRNA = pseudouridine(13) in tRNA. Responsible for synthesis of pseudouridine from uracil-13 in transfer RNAs. The sequence is that of tRNA pseudouridine synthase D from Klebsiella pneumoniae (strain 342).